The sequence spans 224 residues: MINQKKIAGEKACEWIKDGMVVGLGTGSTVYYTIEKLGEMVNNGLHITGVATSEETNKQAQNLGIPLKSLNDVTEIDITIDGADEIDTDFQGIKGGGGALLREKMVASASLKNIWVVSEEKLVRNLGKFPLPLEVIPFGWKQVERKLEKEHIQTNLRKQSSGEVYVTNNGNYILDIVNQTFTDAEMWQEKLAQIPGIVEHGLFLHYVDIIICAKANGEIELIKK.

Substrate-binding positions include 26 to 29 (TGST), 81 to 84 (DGAD), and 94 to 97 (KGGG). The active-site Proton acceptor is the glutamate 103. A substrate-binding site is contributed by lysine 121.

Belongs to the ribose 5-phosphate isomerase family. Homodimer.

It carries out the reaction aldehydo-D-ribose 5-phosphate = D-ribulose 5-phosphate. It participates in carbohydrate degradation; pentose phosphate pathway; D-ribose 5-phosphate from D-ribulose 5-phosphate (non-oxidative stage): step 1/1. Its function is as follows. Catalyzes the reversible conversion of ribose-5-phosphate to ribulose 5-phosphate. This is Ribose-5-phosphate isomerase A from Listeria monocytogenes serovar 1/2a (strain ATCC BAA-679 / EGD-e).